Consider the following 399-residue polypeptide: Developmentally-regulated G-protein 1 (399 aa).

The region spanning 63–288 (GRVALIGFPS…LLARMWDEMG (226 aa)) is the OBG-type G domain. GTP contacts are provided by residues 69–76 (GFPSVGKS), 115–119 (DLPGI), and 246–249 (NKID). The TGS domain occupies 288-366 (GLVRVYSKPQ…EDEDVVQIVK (79 aa)). The interval 367 to 399 (KKERDEGGRGRFKSHSNAPARIADREKKAPLKQ) is disordered. Residues 388–399 (IADREKKAPLKQ) are compositionally biased toward basic and acidic residues.

This sequence belongs to the TRAFAC class OBG-HflX-like GTPase superfamily. OBG GTPase family. In terms of tissue distribution, expressed in actively growing tissues and reproductive organs. Mostly expressed in leaves, stems and siliques. Also present in flowers and flower buds, and, to a lower extent, in roots.

The protein localises to the cytoplasmic vesicle. It is found in the cytoplasm. Binds GDP and GTP, and has low GTPase activity. May interact with phosphatidic acid (PA). The polypeptide is Developmentally-regulated G-protein 1 (DRG1) (Arabidopsis thaliana (Mouse-ear cress)).